The sequence spans 182 residues: Small ribosomal subunit protein uS4c (182 aa).

The region spanning 82–143 (MRLDNILFRL…KERSKVLIQN (62 aa)) is the S4 RNA-binding domain.

The protein belongs to the universal ribosomal protein uS4 family. Part of the 30S ribosomal subunit. Contacts protein S5. The interaction surface between S4 and S5 is involved in control of translational fidelity.

It localises to the plastid. The protein resides in the chloroplast. Its function is as follows. One of the primary rRNA binding proteins, it binds directly to 16S rRNA where it nucleates assembly of the body of the 30S subunit. With S5 and S12 plays an important role in translational accuracy. The sequence is that of Small ribosomal subunit protein uS4c (rps4) from Tigridia sp. (strain Lejeune 1997).